We begin with the raw amino-acid sequence, 270 residues long: Bis(5'-nucleosyl)-tetraphosphatase, symmetrical (270 aa).

Belongs to the Ap4A hydrolase family.

It catalyses the reaction P(1),P(4)-bis(5'-adenosyl) tetraphosphate + H2O = 2 ADP + 2 H(+). Functionally, hydrolyzes diadenosine 5',5'''-P1,P4-tetraphosphate to yield ADP. This Thioalkalivibrio sulfidiphilus (strain HL-EbGR7) protein is Bis(5'-nucleosyl)-tetraphosphatase, symmetrical.